We begin with the raw amino-acid sequence, 517 residues long: ATP synthase subunit alpha 2 (517 aa).

An ATP-binding site is contributed by Gly173 to Thr180.

This sequence belongs to the ATPase alpha/beta chains family. As to quaternary structure, F-type ATPases have 2 components, CF(1) - the catalytic core - and CF(0) - the membrane proton channel. CF(1) has five subunits: alpha(3), beta(3), gamma(1), delta(1), epsilon(1). CF(0) has three main subunits: a(1), b(2) and c(9-12). The alpha and beta chains form an alternating ring which encloses part of the gamma chain. CF(1) is attached to CF(0) by a central stalk formed by the gamma and epsilon chains, while a peripheral stalk is formed by the delta and b chains.

It is found in the cell inner membrane. The enzyme catalyses ATP + H2O + 4 H(+)(in) = ADP + phosphate + 5 H(+)(out). Its function is as follows. Produces ATP from ADP in the presence of a proton gradient across the membrane. The alpha chain is a regulatory subunit. This chain is ATP synthase subunit alpha 2, found in Legionella pneumophila subsp. pneumophila (strain Philadelphia 1 / ATCC 33152 / DSM 7513).